A 131-amino-acid chain; its full sequence is Profilin-2 (131 aa).

This sequence belongs to the profilin family. Occurs in many kinds of cells as a complex with monomeric actin in a 1:1 ratio. As to expression, expressed in vascular bundles of roots, hypocotyls, cotyledons, leaves, sepals, petals, stamen filaments and stalks of developing seeds. Expressed in leaf epidermal cells, trichomes and stem epidermal cells. Detected in phloem exudates (at protein level).

Its subcellular location is the cytoplasm. It is found in the cytoskeleton. The protein resides in the endoplasmic reticulum. The protein localises to the cytosol. It localises to the nucleus. Binds to actin monomers and regulates the organization of the actin cytoskeleton. At high concentrations, profilin prevents the polymerization of actin, whereas it enhances it at low concentrations. At low concentrations, associates with the poly-proline motif of formins to enhance actin filament elongation rate. Binds G-actin and poly-L-proline with low affinity in vitro. Binds ACT1, ACT7 and ACT11 and inhibits actin polymerization. May be involved in the cross-talk between vesicular trafficking and the actin cytoskeleton. Inhibits cell growth of various pathogenic fungal strains. May play a role as antifungal proteins in the defense system against fungal pathogen attacks. This chain is Profilin-2, found in Arabidopsis thaliana (Mouse-ear cress).